The primary structure comprises 224 residues: MGQKVHPIGFRLGVIRSWDSKWYEEKNYAKWLHEDIHLREYVKEKLGQAGISRIEIERAANKVKINVHTARPGIVIGKRGAGIETIKKELQGKTDNEVYLNVVEVRKAETDAQLVAENIATQLERRIAFRRAMKKSVQTALKFGAKGIRVACSGRLGGSEMARYEWYREGRVPLHTLRADIDYGFAEAKTTYGKIGCKVWIMRGEVLPQSASARPPRSAGGARP.

In terms of domain architecture, KH type-2 spans 38-106 (LREYVKEKLG…EVYLNVVEVR (69 aa)).

Belongs to the universal ribosomal protein uS3 family. As to quaternary structure, part of the 30S ribosomal subunit. Forms a tight complex with proteins S10 and S14.

Binds the lower part of the 30S subunit head. Binds mRNA in the 70S ribosome, positioning it for translation. The chain is Small ribosomal subunit protein uS3 from Anaeromyxobacter sp. (strain Fw109-5).